The sequence spans 119 residues: NADH-quinone oxidoreductase subunit A (119 aa).

The next 3 helical transmembrane spans lie at 7 to 27 (FPVL…MSIG), 63 to 83 (LIAI…PWGV), and 88 to 108 (IGWP…VGFV).

This sequence belongs to the complex I subunit 3 family. NDH-1 is composed of 14 different subunits. Subunits NuoA, H, J, K, L, M, N constitute the membrane sector of the complex.

Its subcellular location is the cell inner membrane. It catalyses the reaction a quinone + NADH + 5 H(+)(in) = a quinol + NAD(+) + 4 H(+)(out). Its function is as follows. NDH-1 shuttles electrons from NADH, via FMN and iron-sulfur (Fe-S) centers, to quinones in the respiratory chain. The immediate electron acceptor for the enzyme in this species is believed to be ubiquinone. Couples the redox reaction to proton translocation (for every two electrons transferred, four hydrogen ions are translocated across the cytoplasmic membrane), and thus conserves the redox energy in a proton gradient. The chain is NADH-quinone oxidoreductase subunit A from Cupriavidus pinatubonensis (strain JMP 134 / LMG 1197) (Cupriavidus necator (strain JMP 134)).